Here is a 486-residue protein sequence, read N- to C-terminus: Sensor protein PhoQ (486 aa).

Over 1 to 16 (MKKLLRLFFPLSLRVR) the chain is Cytoplasmic. A helical transmembrane segment spans residues 17-37 (FLLATAAVVLVLSLAYGMVAL). Residues 38–194 (IGYSVSFDKT…LKSSYMVWSW (157 aa)) lie on the Periplasmic side of the membrane. Residues Asp151 and Asp152 each contribute to the a divalent metal cation site. The helical transmembrane segment at 195–215 (FIYVLSANLLLVIPLLWVAAW) threads the bilayer. Residues 215 to 266 (WWSLRPIEALAKEVRELEEHNRELLNPATTRELTSLVRNLNRLLKSERERYD) enclose the HAMP domain. At 216–486 (WSLRPIEALA…GRQHSAPKDE (271 aa)) the chain is on the cytoplasmic side. One can recognise a Histidine kinase domain in the interval 274–480 (DLTHSLKTPL…RMEVIFGRQH (207 aa)). The residue at position 277 (His277) is a Phosphohistidine; by autocatalysis. Residue Asn385 participates in Mg(2+) binding. Residues 385 to 393 (NVLDNACKY), 415 to 420 (DDGPGI), and 434 to 446 (RVDT…GVGL) each bind ATP. Gln442 is a Mg(2+) binding site.

In terms of assembly, homodimer; probably dimerizes via the cytoplasmic domain. Probably interacts with MgrB in the periplasm, altering its activity and that of downstream effector PhoP.

The protein resides in the cell inner membrane. It catalyses the reaction ATP + protein L-histidine = ADP + protein N-phospho-L-histidine.. Its activity is regulated as follows. Acetyl-CoA acts as a non-competitive inhibitor of the PhoQ autokinase activity. Feedback inhibited by MgrB, which seems to bind PhoQ, altering its activity and that of downstream effector PhoP. Its function is as follows. Member of the two-component regulatory system PhoP/PhoQ involved in adaptation to low Mg(2+) environments and the control of acid resistance genes. In low periplasmic Mg(2+), PhoQ functions as a membrane-associated protein kinase that undergoes autophosphorylation and subsequently transfers the phosphate to PhoP, resulting in the expression of PhoP-activated genes (PAG) and repression of PhoP-repressed genes (PRG). In high periplasmic Mg(2+), acts as a protein phosphatase that dephosphorylates phospho-PhoP, resulting in the repression of PAG and may lead to expression of some PRG. PhoP-regulated transcription is redox-sensitive, being activated when the periplasm becomes more reducing (deletion of dsbA/dsbB, or treatment with dithiothreitol). MgrB acts between DsbA/DsbB and PhoP/PhoQ in this pathway; the 2 periplasmic Cys residues of MgrB are required for its action on PhoQ, which then acts on PhoP. Mediates magnesium influx to the cytosol by activation of mgtA. Promotes expression of the two-component regulatory system rstA/rstB and transcription of the hemL, mgrB, nagA, slyB, vboR and yrbL genes. The chain is Sensor protein PhoQ (phoQ) from Escherichia coli (strain K12).